The primary structure comprises 507 residues: MNPLSQSALVPLRKKAKMAPISQSFCQHNVKFKEIVLFLVERKMGSSRRTFLMELARKRGFQTEIELSDSVTHIVAENNSGAEVLEWLQSKKLGFTVKTHILDISWFTECMEAGRPVEIQNRHLLPVQQDCSANFNPPLSSSCVQVSQYACQRCTTLQDTNRIFTDAFDILAEHFEFCENKGRTVAFLRASSLIKSLPFPITAMKELEGLPWLGDQMKGIIEEILEEGKSYKVLEVMNEERYKSFKQFTSVFGVGLKTSDKWFRMGFRTLEEIKNEKELKLTKMQKCGLLYYEDITSYVSRAEAETTEQLIKSIVWKFVPDAIVTLTGGFRRGKKKGHDVDILITCARKGKEKNILHNTMSVLKNRGLLLFYNIIESTFDETKLPSRHVDALDHFQKCFTILKLPKRQMDIGNIIDPHECERKNWKAVRLDLVITPYEQYPYALLGWTGSRQFERDLRRYATHEKRMMLDNHGLYDKTKNNFLKANNEEDIFKQLGLDYLEPWERNA.

Positions 11 to 17 match the Nuclear localization signal motif; that stretch reads PLRKKAK. One can recognise a BRCT domain in the interval 27-124; sequence QHNVKFKEIV…RPVEIQNRHL (98 aa). The segment at 254–258 is involved in DNA binding; it reads VGLKT. Residues 329 to 334 and 338 to 341 contribute to the a 2'-deoxyribonucleoside 5'-triphosphate site; these read GFRRGK and HDVD. Residues aspartate 339, aspartate 341, and aspartate 431 each contribute to the Mg(2+) site. 446–447 serves as a coordination point for a 2'-deoxyribonucleoside 5'-triphosphate; sequence GW.

It belongs to the DNA polymerase type-X family. Mg(2+) is required as a cofactor. Found in the thymus and not in the spleen, kidney, intestine, or liver.

The protein localises to the nucleus. The catalysed reaction is DNA(n) + a 2'-deoxyribonucleoside 5'-triphosphate = DNA(n+1) + diphosphate. Functionally, template-independent DNA polymerase which catalyzes the random addition of deoxynucleoside 5'-triphosphate to the 3'-end of a DNA initiator. One of the in vivo functions of this enzyme is the addition of nucleotides at the junction (N region) of rearranged Ig heavy chain and T-cell receptor gene segments during the maturation of B- and T-cells. The sequence is that of DNA nucleotidylexotransferase (dntt) from Xenopus laevis (African clawed frog).